The following is a 392-amino-acid chain: Odorant receptor 9a (392 aa).

Residues 1-41 (MSDKVKGKKQEEKDQSLRVQILVYRCMGIDLWSPTMANDRP) lie on the Cytoplasmic side of the membrane. Residues 42–62 (WLTFVTMGPLFLFMVPMFLAA) form a helical membrane-spanning segment. At 63-74 (HEYITQVSLLSD) the chain is on the extracellular side. The helical transmembrane segment at 75–95 (TLGSTFASMLTLVKFLLFCYH) threads the bilayer. At 96 to 141 (RKEFVGLIYHIRAILAKEIEVWPDAREIIEVENQSDQMLSLTYTRC) the chain is on the cytoplasmic side. The helical transmembrane segment at 142 to 162 (FGLAGIFAALKPFVGIILSSI) threads the bilayer. The Extracellular portion of the chain corresponds to 163-202 (RGDEIHLELPHNGVYPYDLQVVMFYVPTYLWNVMASYSAV). A helical membrane pass occupies residues 203–223 (TMALCVDSLLFFFTYNVCAIF). Residues 224 to 268 (KIAKHRMIHLPAVGGKEELEGLVQVLLLHQKGLQIADHIADKYRP) lie on the Cytoplasmic side of the membrane. A helical transmembrane segment spans residues 269–289 (LIFLQFFLSALQICFIGFQVA). At 290–297 (DLFPNPQS) the chain is on the extracellular side. Residues 298–318 (LYFIAFVGSLLIALFIYSKCG) form a helical membrane-spanning segment. Residues 319–362 (ENIKSASLDFGNGLYETNWTDFSPPTKRALLIAAMRAQRPCQMK) lie on the Cytoplasmic side of the membrane. Residues 363–383 (GYFFEASMATFSTIVRSAVSY) form a helical membrane-spanning segment. The Extracellular segment spans residues 384–392 (IMMLRSFNA).

This sequence belongs to the insect chemoreceptor superfamily. Heteromeric odorant receptor channel (TC 1.A.69) family. Or1a subfamily. In terms of assembly, interacts with Orco. Complexes exist early in the endomembrane system in olfactory sensory neurons (OSNs), coupling these complexes to the conserved ciliary trafficking pathway. In terms of tissue distribution, expressed in olfactory sensory neurons in the antenna.

Its subcellular location is the cell membrane. In terms of biological role, odorant receptor which mediates acceptance or avoidance behavior, depending on its substrates. The odorant receptor repertoire encodes a large collection of odor stimuli that vary widely in identity, intensity, and duration. May form a complex with Orco to form odorant-sensing units, providing sensitive and prolonged odorant signaling and calcium permeability. The polypeptide is Odorant receptor 9a (Or9a) (Drosophila melanogaster (Fruit fly)).